The following is a 431-amino-acid chain: Sulfide dehydrogenase [flavocytochrome c] flavoprotein chain (431 aa).

The segment at residues 1–30 is a signal peptide (tat-type signal); that stretch reads MTLNRRDFIKTSGAAVAAVGILGFPHLAFG. Position 70–76 (70–76) interacts with FAD; sequence YTCYLSN. A disulfide bridge links Cys-191 with Cys-367.

As to quaternary structure, dimer of one cytochrome and one flavoprotein. Post-translationally, predicted to be exported by the Tat system. The position of the signal peptide cleavage has been experimentally proven.

The protein localises to the periplasm. It carries out the reaction hydrogen sulfide + 2 Fe(III)-[cytochrome c] = sulfur + 2 Fe(II)-[cytochrome c] + H(+). The sequence is that of Sulfide dehydrogenase [flavocytochrome c] flavoprotein chain (fccB) from Allochromatium vinosum (strain ATCC 17899 / DSM 180 / NBRC 103801 / NCIMB 10441 / D) (Chromatium vinosum).